The primary structure comprises 132 residues: Small ribosomal subunit protein uS8 (132 aa).

It belongs to the universal ribosomal protein uS8 family. In terms of assembly, part of the 30S ribosomal subunit. Contacts proteins S5 and S12.

Functionally, one of the primary rRNA binding proteins, it binds directly to 16S rRNA central domain where it helps coordinate assembly of the platform of the 30S subunit. This Arthrobacter sp. (strain FB24) protein is Small ribosomal subunit protein uS8.